The following is a 119-amino-acid chain: Large ribosomal subunit protein uL22 (119 aa).

This sequence belongs to the universal ribosomal protein uL22 family. As to quaternary structure, part of the 50S ribosomal subunit.

Its function is as follows. This protein binds specifically to 23S rRNA; its binding is stimulated by other ribosomal proteins, e.g. L4, L17, and L20. It is important during the early stages of 50S assembly. It makes multiple contacts with different domains of the 23S rRNA in the assembled 50S subunit and ribosome. In terms of biological role, the globular domain of the protein is located near the polypeptide exit tunnel on the outside of the subunit, while an extended beta-hairpin is found that lines the wall of the exit tunnel in the center of the 70S ribosome. The protein is Large ribosomal subunit protein uL22 of Tropheryma whipplei (strain TW08/27) (Whipple's bacillus).